Consider the following 91-residue polypeptide: Small ribosomal subunit protein eS24 (91 aa).

The disordered stretch occupies residues 51-91 (QRRKDAAAHKEAYNAMPEAERRHLNSEKYANRKAEVSYKHR).

Belongs to the eukaryotic ribosomal protein eS24 family.

This chain is Small ribosomal subunit protein eS24, found in Caenorhabditis elegans.